Consider the following 117-residue polypeptide: Large ribosomal subunit protein uL18 (117 aa).

It belongs to the universal ribosomal protein uL18 family. In terms of assembly, part of the 50S ribosomal subunit; part of the 5S rRNA/L5/L18/L25 subcomplex. Contacts the 5S and 23S rRNAs.

In terms of biological role, this is one of the proteins that bind and probably mediate the attachment of the 5S RNA into the large ribosomal subunit, where it forms part of the central protuberance. The sequence is that of Large ribosomal subunit protein uL18 from Leuconostoc citreum (strain KM20).